Consider the following 62-residue polypeptide: Pro-MCH variant (62 aa).

The tract at residues 23–41 is NGE-like; the sequence is GSVAFPAENGVQDTESTQE. Residues 29 to 62 form a disordered region; the sequence is AENGVQDTESTQEKRETGDEENSAKFPIGRRDFD. Residues 44–56 form an NEI-like region; sequence ETGDEENSAKFPI. The melanin-concentrating hormone-like stretch occupies residues 60 to 62; that stretch reads DFD.

It belongs to the melanin-concentrating hormone family.

This Pan paniscus (Pygmy chimpanzee) protein is Pro-MCH variant (PMCHL1).